We begin with the raw amino-acid sequence, 113 residues long: Large ribosomal subunit protein P1 (113 aa).

The tract at residues 84-113 (APAAAAKKETKKEEVKKEESDDDMGMGLFD) is disordered. A compositionally biased stretch (basic and acidic residues) spans 89–102 (AKKETKKEEVKKEE).

This sequence belongs to the eukaryotic ribosomal protein P1/P2 family. As to quaternary structure, P1 and P2 exist as dimers at the large ribosomal subunit.

Functionally, plays an important role in the elongation step of protein synthesis. This Dictyostelium discoideum (Social amoeba) protein is Large ribosomal subunit protein P1 (rplp1).